A 209-amino-acid chain; its full sequence is Uracil phosphoribosyltransferase (209 aa).

5-phospho-alpha-D-ribose 1-diphosphate contacts are provided by residues R79, R104, and 131-139; that span reads DPMLATGGS. Uracil is bound by residues I194 and 199–201; that span reads GDA. D200 contacts 5-phospho-alpha-D-ribose 1-diphosphate.

This sequence belongs to the UPRTase family. It depends on Mg(2+) as a cofactor.

The enzyme catalyses UMP + diphosphate = 5-phospho-alpha-D-ribose 1-diphosphate + uracil. The protein operates within pyrimidine metabolism; UMP biosynthesis via salvage pathway; UMP from uracil: step 1/1. Allosterically activated by GTP. In terms of biological role, catalyzes the conversion of uracil and 5-phospho-alpha-D-ribose 1-diphosphate (PRPP) to UMP and diphosphate. This chain is Uracil phosphoribosyltransferase, found in Listeria innocua serovar 6a (strain ATCC BAA-680 / CLIP 11262).